The sequence spans 1142 residues: Ribonucleoside-diphosphate reductase large subunit (1142 aa).

The interval 1 to 33 (MANRPAASALAGARSPSERQEPREPEVAPPGGD) is disordered. Basic and acidic residues predominate over residues 16–26 (PSERQEPREPE). Residues 55–75 (AYRISDSSFVQCGSNCSMIID) carry the RIP homotypic interaction motif (RHIM) motif. The disordered stretch occupies residues 118–322 (SGPSATTSVG…TDPGYPVPLE (205 aa)). The segment covering 119 to 132 (GPSATTSVGTQTSG) has biased composition (polar residues). Over residues 141–159 (TPEPQGPQAVPPPPPPPFP) the composition is skewed to pro residues. The span at 164–179 (CCARRDARGGAEKDVG) shows a compositional bias: basic and acidic residues. Over residues 192-205 (SETEDSDSSDEDTG) the composition is skewed to acidic residues. The span at 277–303 (GSATDPRASADSDSAAHAAAPQADVAP) shows a compositional bias: low complexity. The tract at residues 294–400 (AAAPQADVAP…CLDLPPVPPN (107 aa)) is alpha-crystallin domain. Substrate contacts are provided by residues T571, 586–587 (SC), G617, 796–800 (NLCTE), and 973–977 (PTAAS). C587 and C813 are disulfide-bonded. Residue N796 is the Proton acceptor of the active site. C798 functions as the Cysteine radical intermediate in the catalytic mechanism. The Proton acceptor role is filled by E800.

It belongs to the ribonucleoside diphosphate reductase large chain family. As to quaternary structure, heterotetramer composed of a homodimer of the large subunit (R1) and a homodimer of the small subunit (R2). Larger multisubunit protein complex are also active, composed of (R1)n(R2)n. May self-assemble (via RIP homotypic interaction motif/RHIM) into homomeric fibrillar amyloid structures. Interacts (via RHIM) with human RIPK1 (via RHIM). Interacts (via RHIM) with human RIPK3 (via RHIM). May interact (via RHIM) with human ZBP1 (via RHIM). Interacts (via C-terminus) with host CASP8.

The protein localises to the host cell membrane. The protein resides in the host endosome membrane. The catalysed reaction is a 2'-deoxyribonucleoside 5'-diphosphate + [thioredoxin]-disulfide + H2O = a ribonucleoside 5'-diphosphate + [thioredoxin]-dithiol. In terms of biological role, ribonucleoside-diphosphate reductase holoenzyme that provides the precursors necessary for viral DNA synthesis. Allows virus growth in non-dividing cells, as well as reactivation from latency in infected hosts. Catalyzes the biosynthesis of deoxyribonucleotides from the corresponding ribonucleotides. The N-terminal region confers antiapoptotic activity in differentiated cells such as neurons and is important for viral reactivation to increase neural survivability. Prevents host necroptosis by targeting host RIPK1 and RIPK3, thereby hampering the formation of necroptotic RIPK1-RIPK3 complexes. May form hetero-amyloid structures with host proteins RIPK3 or ZBP1, thereby preventing RIPK3- and ZBP1-mediated necroptosis. In addition, inhibits extrinsic apoptosis by targeting host CASP8. In Homo sapiens (Human), this protein is Ribonucleoside-diphosphate reductase large subunit.